The following is a 246-amino-acid chain: Carboxylesterase (246 aa).

The active-site Nucleophile is serine 93. Catalysis depends on charge relay system residues aspartate 192 and histidine 222.

Belongs to the lipase/esterase LIP3/BchO family. As to quaternary structure, homodimer.

The catalysed reaction is a carboxylic ester + H2O = an alcohol + a carboxylate + H(+). In terms of biological role, involved in the detoxification of xenobiotics. Shows maximal activity with C6 substrates, with gradually decreasing activity from C8 to C12 substrates. No activity for higher chain length substrates acids rather than long-chain ones. The chain is Carboxylesterase (est) from Bacillus subtilis (strain 168).